The primary structure comprises 251 residues: Regulator of G-protein signaling 9-binding protein B (251 aa).

Residues 1–230 are Cytoplasmic-facing; that stretch reads MPLQNVKVAD…NSKGCCSDGQ (230 aa). 2 coiled-coil regions span residues 52-94 and 158-187; these read HLRD…ELER and ANKASLEYQEIEEEILKVDNMITDMEMKVN. The chain crosses the membrane as a helical; Anchor for type IV membrane protein span at residues 231 to 250; the sequence is LIVFLLLCGTALVAITLYSI. Residue L251 is a topological domain, extracellular.

The protein belongs to the RGS7BP/RGS9BP family.

The protein resides in the membrane. Its function is as follows. Regulator of G protein-coupled receptor (GPCR) signaling. Probably acts by regulating the activity of some 'R7' family protein (RGS6, RGS7, RGS9 and/or RGS11). The sequence is that of Regulator of G-protein signaling 9-binding protein B (rgs9bp-b) from Xenopus laevis (African clawed frog).